Here is a 364-residue protein sequence, read N- to C-terminus: Aminomethyltransferase (364 aa).

Belongs to the GcvT family. In terms of assembly, the glycine cleavage system is composed of four proteins: P, T, L and H.

It carries out the reaction N(6)-[(R)-S(8)-aminomethyldihydrolipoyl]-L-lysyl-[protein] + (6S)-5,6,7,8-tetrahydrofolate = N(6)-[(R)-dihydrolipoyl]-L-lysyl-[protein] + (6R)-5,10-methylene-5,6,7,8-tetrahydrofolate + NH4(+). Functionally, the glycine cleavage system catalyzes the degradation of glycine. The sequence is that of Aminomethyltransferase from Escherichia coli O81 (strain ED1a).